We begin with the raw amino-acid sequence, 626 residues long: Janus kinase and microtubule-interacting protein 1 (626 aa).

Positions methionine 1–glutamate 25 are disordered. The tract at residues methionine 1–valine 365 is mediates association with microtubules. Coiled-coil stretches lie at residues glutamate 13 to arginine 255 and glutamate 284 to serine 413. Positions valine 365 to methionine 626 are mediates interaction with TYK2 and GABBR1. At serine 382 the chain carries Phosphoserine. Over residues glutamate 452–threonine 461 the composition is skewed to polar residues. Residues glutamate 452 to arginine 481 form a disordered region. At threonine 470 the chain carries Phosphothreonine. Positions glutamine 490–arginine 604 form a coiled coil.

It belongs to the JAKMIP family. Homodimer. Interacts with JAK1 and TYK2. Forms a complex with GABBR1 and KIF5B/kinesin-1. In terms of processing, phosphorylated.

Its subcellular location is the cytoplasm. It localises to the cytoskeleton. The protein resides in the membrane. Its function is as follows. Associates with microtubules and may play a role in the microtubule-dependent transport of the GABA-B receptor. May play a role in JAK1 signaling and regulate microtubule cytoskeleton rearrangements. This Mus musculus (Mouse) protein is Janus kinase and microtubule-interacting protein 1 (Jakmip1).